The following is a 678-amino-acid chain: Putative pentatricopeptide repeat-containing protein At3g18840 (678 aa).

PPR repeat units lie at residues 22-56, 57-84, 85-116, 124-158, 159-190, 192-222, 224-258, 259-293, 294-324, 325-359, 360-390, 392-426, 427-457, 458-492, 493-528, and 529-563; these read TAVS…NVYS, WNAV…NCER, DLIT…MHRK, DDFT…GNDG, TKFA…CVEF, DSVA…NPEL, DTIS…GLKW, DEHS…GSYS, NKFV…YGFG, NLYS…NLVV, WTAM…ETNT, DSLV…GILM, DKKL…SFER, DTVM…GFKP, DEIT…NISP, and ETGH…EKDA. The type E motif stretch occupies residues 565–640; that stretch reads ILGAFLNACS…FSGCSWANID (76 aa). The type E(+) motif stretch occupies residues 641–671; the sequence is KQFHMFTSSDISHYETEAIYAMLHFVTKDLS.

Belongs to the PPR family. PCMP-E subfamily.

The sequence is that of Putative pentatricopeptide repeat-containing protein At3g18840 (PCMP-E92) from Arabidopsis thaliana (Mouse-ear cress).